The sequence spans 181 residues: Ribulose bisphosphate carboxylase small subunit, chloroplastic 2 (181 aa).

The transit peptide at 1–57 (MAFLIMSSAAAVATGTNAAQASMIAPFTGLKSATSFPVSRKQNLDITSIASNGGRVQ) directs the protein to the chloroplast.

The protein belongs to the RuBisCO small chain family. Heterohexadecamer of 8 large and 8 small subunits.

The protein localises to the plastid. Its subcellular location is the chloroplast. RuBisCO catalyzes two reactions: the carboxylation of D-ribulose 1,5-bisphosphate, the primary event in carbon dioxide fixation, as well as the oxidative fragmentation of the pentose substrate. Both reactions occur simultaneously and in competition at the same active site. Although the small subunit is not catalytic it is essential for maximal activity. This chain is Ribulose bisphosphate carboxylase small subunit, chloroplastic 2, found in Nicotiana sylvestris (Wood tobacco).